Consider the following 434-residue polypeptide: Tol-Pal system protein TolB (434 aa).

Residues methionine 1–alanine 28 form the signal peptide.

This sequence belongs to the TolB family. As to quaternary structure, the Tol-Pal system is composed of five core proteins: the inner membrane proteins TolA, TolQ and TolR, the periplasmic protein TolB and the outer membrane protein Pal. They form a network linking the inner and outer membranes and the peptidoglycan layer.

The protein localises to the periplasm. Functionally, part of the Tol-Pal system, which plays a role in outer membrane invagination during cell division and is important for maintaining outer membrane integrity. This is Tol-Pal system protein TolB from Nitrosococcus oceani (strain ATCC 19707 / BCRC 17464 / JCM 30415 / NCIMB 11848 / C-107).